A 492-amino-acid chain; its full sequence is Propanoyl-CoA:succinate CoA transferase (492 aa).

CoA is bound at residue 260–264 (GVGNI). The active-site 5-glutamyl coenzyme A thioester intermediate is the Glu286. Residues Asn376 and Gly380 each contribute to the CoA site.

This sequence belongs to the acetyl-CoA hydrolase/transferase family.

The enzyme catalyses propanoyl-CoA + succinate = propanoate + succinyl-CoA. Its function is as follows. Catalyzes the transfer of coenzyme A from propionyl-CoA to succinate. Could be part of a pathway that converts succinate to propionate. This Escherichia coli (strain K12) protein is Propanoyl-CoA:succinate CoA transferase.